A 633-amino-acid polypeptide reads, in one-letter code: DNA mismatch repair protein MutL (633 aa).

It belongs to the DNA mismatch repair MutL/HexB family.

Functionally, this protein is involved in the repair of mismatches in DNA. It is required for dam-dependent methyl-directed DNA mismatch repair. May act as a 'molecular matchmaker', a protein that promotes the formation of a stable complex between two or more DNA-binding proteins in an ATP-dependent manner without itself being part of a final effector complex. The protein is DNA mismatch repair protein MutL of Macrococcus caseolyticus (strain JCSC5402) (Macrococcoides caseolyticum).